We begin with the raw amino-acid sequence, 249 residues long: UPF0758 protein BMEI0718 (249 aa).

Residues 1 to 34 (MAKKKDTPGDGEFPGFSDTLQRTPKLEKPHYAGH) are disordered. The span at 24-34 (PKLEKPHYAGH) shows a compositional bias: basic and acidic residues. In terms of domain architecture, MPN spans 127 to 249 (VLGSWDKVIN…HASLRSLRLI (123 aa)). Zn(2+) is bound by residues histidine 198, histidine 200, and aspartate 211. A JAMM motif motif is present at residues 198-211 (HNHPSGDPTPSRAD).

Belongs to the UPF0758 family.

The polypeptide is UPF0758 protein BMEI0718 (Brucella melitensis biotype 1 (strain ATCC 23456 / CCUG 17765 / NCTC 10094 / 16M)).